Reading from the N-terminus, the 450-residue chain is Beclin-1 (450 aa).

An N-acetylmethionine modification is found at M1. Residues S15 and S30 each carry the phosphoserine modification. A disordered region spans residues T48–T72. 3 positions are modified to phosphoserine; by AMPK: S90, S93, and S96. The BH3 signature appears at T108–S127. The tract at residues L112 to C159 is interaction with BCL2 and BCL2L1 isoform Bcl-X(L). A Phosphothreonine; by DAPK1 modification is found at T119. A coiled-coil region spans residues D142–F270. Residues D245–K450 are evolutionary conserved domain (ECD). Glycyl lysine isopeptide (Lys-Gly) (interchain with G-Cter in ubiquitin) cross-links involve residues K402 and K437. Residues W425–K450 are required for membrane-association.

The protein belongs to the beclin family. In terms of assembly, a homodimeric form is proposed to exist; this metastable form readily transits to ATG14- or UVRAG-containing complexes with BECN1:UVRAG being more stable than BECN1:ATG14. Component of the PI3K (PI3KC3/PI3K-III/class III phosphatidylinositol 3-kinase) complex the core of which is composed of the catalytic subunit PIK3C3, the regulatory subunit PIK3R4 and BECN1 associating with additional regulatory/auxiliary subunits to form alternative complex forms. Alternative complex forms containing a fourth regulatory subunit in a mutually exclusive manner are PI3K complex I (PI3KC3-C1) containing ATG14, and PI3K complex II (PI3KC3-C2) containing UVRAG. PI3KC3-C1 displays a V-shaped architecture with PIK3R4 serving as a bridge between PIK3C3 and the ATG14:BECN1 subcomplex. Both, PI3KC3-C1 and PI3KC3-C2, can associate with further regulatory subunits, such as RUBCN, SH3GLB1/Bif-1 and AMBRA1. PI3KC3-C1 probably associates with PIK3CB. Forms a complex with PPP2CA and AMBRA1; AMBRA1 and BECN1 components of the complex regulate MYC stability via different pathways. Component of the complex, at least composed of LRPPRC, BECN1 and BCL2; the interactions prevent BECN1 from forming an autophagy-inducing complex with PIK3C3. Interacts with AMBRA1, GOPC, GRID2. Interacts with BCL2 and BCL2L1 isoform Bcl-X(L); the interaction inhibits BECN1 function in promoting autophagy by interfering with the formation of the PI3K complex. Interacts with cytosolic HMGB1; inhibits the interaction of BECN1 and BCL2 leading to promotion of autophagy. Interacts with USP10, USP13, VMP1, DAPK1, RAB39A. Interacts with the poly-Gln domain of ATXN3; the interaction causes deubiquitination at Lys-402 and stabilizes BECN1. Interacts with SLAMF1. Interacts with TRIM5; the interaction causes activation of BECN1 by causing its dissociation from its inhibitors BCL2 and TAB2. Interacts with active ULK1 (phosphorylated on 'Ser-317') and MEFV simultaneously. Interacts with WDR81 and WDR91; negatively regulates the PI3 kinase/PI3K activity associated with endosomal membranes. Interacts with LAPTM4B; competes with EGFR for LAPTM4B binding; regulates EGFR activity. Interacts with TRIM50. Interacts with TRIM16. Interacts with ATG14; this interaction is increased in the absence of TMEM39A. Interacts with WASHC1; preventing interaction with AMBRA1 and the DCX(AMBRA1) complex and subsequent ubiquitination. Interacts with TRIM17. Interacts with BCL2L10/BCL-B (via BH1 domain). Interacts with SH3BGRL. Interacts with IRGM; enhancing BECN1-interacting partners and influencing the composition of the BECN1 complex. Interacts with ARMC3. Interacts with LRPPRC. (Microbial infection) Interacts with human cytomegalovirus/HHV-5 protein TRS1. As to quaternary structure, (Microbial infection) Interacts with murine gammaherpesvirus 68 M11. In terms of assembly, (Microbial infection) Interacts with herpes simplex virus 1 (HHV-1) protein ICP34.5; this interaction antagonizes the host autophagy response. (Microbial infection) Interacts with Epstein-Barr virus protein BHRF1; this interaction inhibits BECN1-mediated autophagy induction. In terms of processing, phosphorylation at Thr-119 by DAPK1 reduces its interaction with BCL2 and BCL2L1 and promotes induction of autophagy. In response to autophagic stimuli, phosphorylated at serine residues by AMPK in an ATG14-dependent manner, and this phosphorylation is critical for maximally efficient autophagy. Polyubiquitinated by NEDD4, both with 'Lys-11'- and 'Lys-63'-linkages. 'Lys-11'-linked polyubiquitination leads to degradation and is enhanced when the stabilizing interaction partner VPS34 is depleted. Deubiquitinated by USP10 and USP13, leading to stabilize the PIK3C3/VPS34-containing complexes. Polyubiquitinated at Lys-402 with 'Lys-48'-linkages. 'Lys-48'-linked polyubiquitination of Lys-402 leads to degradation. Deubiquitinated by ATXN3, leading to stabilization. Ubiquitinated at Lys-437 via 'Lys-63'-linkage by the DCX(AMBRA1) complex, thereby increasing the association between BECN1 and PIK3C3 to promote PIK3C3 activity. 'Lys-48'-linked ubiquitination by RNF216 leads to proteasomal degradation and autophagy inhibition. Post-translationally, proteolytically processed by caspases including CASP8 and CASP3; the C-terminal fragments lack autophagy-inducing capacity and are proposed to induce apoptosis. Thus the cleavage is proposed to be an determinant to switch from autophagy to apoptosis pathways affecting cellular homeostasis including viral infections and survival of tumor cells. Ubiquitous.

It localises to the cytoplasm. The protein resides in the golgi apparatus. Its subcellular location is the trans-Golgi network membrane. It is found in the endosome membrane. The protein localises to the endoplasmic reticulum membrane. It localises to the mitochondrion membrane. The protein resides in the endosome. Its subcellular location is the cytoplasmic vesicle. It is found in the autophagosome. The protein localises to the mitochondrion. It localises to the nucleus. Its function is as follows. Plays a central role in autophagy. Acts as a core subunit of the PI3K complex that mediates formation of phosphatidylinositol 3-phosphate; different complex forms are believed to play a role in multiple membrane trafficking pathways: PI3KC3-C1 is involved in initiation of autophagosomes and PI3KC3-C2 in maturation of autophagosomes and endocytosis. Involved in regulation of degradative endocytic trafficking and required for the abscission step in cytokinesis, probably in the context of PI3KC3-C2. Essential for the formation of PI3KC3-C2 but not PI3KC3-C1 PI3K complex forms. Involved in endocytosis. May play a role in antiviral host defense. Functionally, beclin-1-C 35 kDa localized to mitochondria can promote apoptosis; it induces the mitochondrial translocation of BAX and the release of proapoptotic factors. In terms of biological role, (Microbial infection) Protects against infection by a neurovirulent strain of Sindbis virus. The polypeptide is Beclin-1 (BECN1) (Homo sapiens (Human)).